The primary structure comprises 609 residues: UvrABC system protein C (609 aa).

The region spanning 22-100 (EKPGVYQYLN…IKKYKPRYNV (79 aa)) is the GIY-YIG domain. Residues 214–249 (QDISRMLVEKMQELANEMKFEEAQKIKEKYLLIENY) enclose the UVR domain.

It belongs to the UvrC family. Interacts with UvrB in an incision complex.

The protein localises to the cytoplasm. Functionally, the UvrABC repair system catalyzes the recognition and processing of DNA lesions. UvrC both incises the 5' and 3' sides of the lesion. The N-terminal half is responsible for the 3' incision and the C-terminal half is responsible for the 5' incision. This Bacteroides thetaiotaomicron (strain ATCC 29148 / DSM 2079 / JCM 5827 / CCUG 10774 / NCTC 10582 / VPI-5482 / E50) protein is UvrABC system protein C.